Consider the following 376-residue polypeptide: Ribonucleoside-diphosphate reductase subunit beta (376 aa).

3 residues coordinate Fe cation: Asp-85, Glu-116, and His-119. The active site involves Tyr-123. Positions 205, 239, and 242 each coordinate Fe cation.

Belongs to the ribonucleoside diphosphate reductase small chain family. Tetramer of two alpha and two beta subunits. Requires Fe cation as cofactor.

It catalyses the reaction a 2'-deoxyribonucleoside 5'-diphosphate + [thioredoxin]-disulfide + H2O = a ribonucleoside 5'-diphosphate + [thioredoxin]-dithiol. In terms of biological role, provides the precursors necessary for DNA synthesis. Catalyzes the biosynthesis of deoxyribonucleotides from the corresponding ribonucleotides. The protein is Ribonucleoside-diphosphate reductase subunit beta (nrdB) of Buchnera aphidicola subsp. Baizongia pistaciae (strain Bp).